A 333-amino-acid chain; its full sequence is Protein XAP5 CIRCADIAN TIMEKEEPER (333 aa).

Coiled coils occupy residues 12 to 43 (AQDA…SDGQ) and 70 to 116 (TREQ…VRGD). The span at 89–98 (EKEKLQKLQQ) shows a compositional bias: basic and acidic residues. Residues 89-171 (EKEKLQKLQQ…REREAEEQAE (83 aa)) are disordered. A compositionally biased stretch (acidic residues) spans 123-136 (DEIENGSDEDEFEN). Basic and acidic residues predominate over residues 160-171 (PDREREAEEQAE).

Belongs to the FAM50 family.

Its subcellular location is the nucleus. Involved in light regulation of the circadian clock and photomorphogenesis. The chain is Protein XAP5 CIRCADIAN TIMEKEEPER (XCT) from Oryza sativa subsp. indica (Rice).